The primary structure comprises 188 residues: Protein CRIPTO3 (188 aa).

The region spanning 78–107 (LNRTCCLNGGTCMLESFCACPPSFYGRNCE) is the EGF-like domain. The N-linked (GlcNAc...) asparagine glycan is linked to N79. Cystine bridges form between C82/C89, C83/C95, C97/C106, C115/C133, C128/C149, and C131/C140.

Belongs to the EGF-CFC (Cripto-1/FRL1/Cryptic) family. In terms of tissue distribution, expressed weakly in lung, colon and breast. Expressed also strongly in primary cancer tissues; lung and colon cancers.

It is found in the cell membrane. In terms of biological role, could play a role in the determination of the epiblastic cells that subsequently give rise to the mesoderm. Activates the Nodal-dependent signaling pathway. The sequence is that of Protein CRIPTO3 from Homo sapiens (Human).